The following is a 360-amino-acid chain: 1-deoxy-D-xylulose 5-phosphate reductoisomerase (360 aa).

NADPH-binding residues include Ser-7, Gly-8, Ser-9, Ile-10, and Asn-115. Residue Lys-116 participates in 1-deoxy-D-xylulose 5-phosphate binding. Glu-117 provides a ligand contact to NADPH. Asp-135 provides a ligand contact to Mn(2+). Residues Ser-136, Glu-137, Ser-159, and His-182 each contribute to the 1-deoxy-D-xylulose 5-phosphate site. Residue Glu-137 participates in Mn(2+) binding. Gly-188 lines the NADPH pocket. The 1-deoxy-D-xylulose 5-phosphate site is built by Ser-195, Asn-200, Lys-201, and Glu-204. Residue Glu-204 coordinates Mn(2+).

The protein belongs to the DXR family. Mg(2+) is required as a cofactor. It depends on Mn(2+) as a cofactor.

It catalyses the reaction 2-C-methyl-D-erythritol 4-phosphate + NADP(+) = 1-deoxy-D-xylulose 5-phosphate + NADPH + H(+). It functions in the pathway isoprenoid biosynthesis; isopentenyl diphosphate biosynthesis via DXP pathway; isopentenyl diphosphate from 1-deoxy-D-xylulose 5-phosphate: step 1/6. Its function is as follows. Catalyzes the NADPH-dependent rearrangement and reduction of 1-deoxy-D-xylulose-5-phosphate (DXP) to 2-C-methyl-D-erythritol 4-phosphate (MEP). This chain is 1-deoxy-D-xylulose 5-phosphate reductoisomerase, found in Campylobacter fetus subsp. fetus (strain 82-40).